The sequence spans 550 residues: Chaperonin GroEL 2 (550 aa).

Residues 30-33, lysine 51, 87-91, glycine 415, and aspartate 496 each bind ATP; these read TLGP and DGTTT.

Belongs to the chaperonin (HSP60) family. Forms a cylinder of 14 subunits composed of two heptameric rings stacked back-to-back. Interacts with the co-chaperonin GroES.

It localises to the cytoplasm. It carries out the reaction ATP + H2O + a folded polypeptide = ADP + phosphate + an unfolded polypeptide.. Its function is as follows. Together with its co-chaperonin GroES, plays an essential role in assisting protein folding. The GroEL-GroES system forms a nano-cage that allows encapsulation of the non-native substrate proteins and provides a physical environment optimized to promote and accelerate protein folding. The polypeptide is Chaperonin GroEL 2 (Bradyrhizobium diazoefficiens (strain JCM 10833 / BCRC 13528 / IAM 13628 / NBRC 14792 / USDA 110)).